Here is an 858-residue protein sequence, read N- to C-terminus: Bifunctional uridylyltransferase/uridylyl-removing enzyme (858 aa).

A uridylyltransferase region spans residues 1–324 (MSAHAAPSPE…PATSGITRVL (324 aa)). Residues 325–681 (SADRFVEKQG…ARPSPIGDAL (357 aa)) form a uridylyl-removing region. The region spanning 443 to 565 (VDQHILMVLR…VGNERYLTAL (123 aa)) is the HD domain. ACT domains are found at residues 682 to 763 (QVLV…PSKG) and 790 to 858 (ILSV…AIAV).

Belongs to the GlnD family. Mg(2+) serves as cofactor.

It carries out the reaction [protein-PII]-L-tyrosine + UTP = [protein-PII]-uridylyl-L-tyrosine + diphosphate. The catalysed reaction is [protein-PII]-uridylyl-L-tyrosine + H2O = [protein-PII]-L-tyrosine + UMP + H(+). Its activity is regulated as follows. Uridylyltransferase (UTase) activity is inhibited by glutamine, while glutamine activates uridylyl-removing (UR) activity. Its function is as follows. Modifies, by uridylylation and deuridylylation, the PII regulatory proteins (GlnB and homologs), in response to the nitrogen status of the cell that GlnD senses through the glutamine level. Under low glutamine levels, catalyzes the conversion of the PII proteins and UTP to PII-UMP and PPi, while under higher glutamine levels, GlnD hydrolyzes PII-UMP to PII and UMP (deuridylylation). Thus, controls uridylylation state and activity of the PII proteins, and plays an important role in the regulation of nitrogen assimilation and metabolism. The protein is Bifunctional uridylyltransferase/uridylyl-removing enzyme of Burkholderia orbicola (strain MC0-3).